A 1678-amino-acid polypeptide reads, in one-letter code: Serine/threonine-protein kinase pakD (1678 aa).

The segment covering 1-15 has biased composition (low complexity); the sequence is MSRLQPQQQQRGRSS. 4 disordered regions span residues 1-73, 180-224, 262-428, and 442-489; these read MSRL…NNKF, NSNS…PNKN, QLSS…NNNN, and KRKS…SQSS. The segment covering 17-34 has biased composition (polar residues); that stretch reads FKDNFQIQKPLQSLTPSE. Low complexity-rich tracts occupy residues 35-73 and 180-214; these read QQQQ…NNKF and NSNS…NNNN. The Calponin-homology (CH) domain occupies 82–189; that stretch reads KNVENDIKKW…NSNSSKTTTN (108 aa). Over residues 215–224 the composition is skewed to polar residues; that stretch reads RAIITSPNKN. Composition is skewed to low complexity over residues 276–359 and 399–428; these read NNNN…NINN and NNNN…NNNN. A compositionally biased stretch (acidic residues) spans 460–472; sequence DSSDSSDSSDSDS. Coiled-coil stretches lie at residues 512-542 and 570-628; these read KQDK…KKLL and TRQI…YANT. 3 stretches are compositionally biased toward low complexity: residues 631–654, 662–671, and 695–713; these read SSNS…INGS, NSSTSKGTLS, and NSHQ…QTTS. 2 disordered regions span residues 631–672 and 693–722; these read SSNS…TLSR and PVNS…ASYN. Residues 752 to 862 are a coiled coil; that stretch reads VSATLQQKQQ…QNQQINNLID (111 aa). Residues 1141-1197 form a Phorbol-ester/DAG-type zinc finger; the sequence is PHSFVLKSFRIISECNYCRQYIWGVRGIVAREAFECVGCKYKTHKKCLKEASEKTFC. One can recognise a CRIB domain in the interval 1202 to 1215; that stretch reads VGAPFNVKHEMHVG. Disordered regions lie at residues 1267-1292 and 1323-1346; these read LTNN…QQNQ and NNTY…PNNN. The stretch at 1269-1309 forms a coiled coil; that stretch reads NNSNNNNNNNNSNNNLQQQQQQNQQLKQKLNITNNQQNNTI. One can recognise a Protein kinase domain in the interval 1376–1647; it reads YKVREVVGGG…AHYLLRHPFL (272 aa). Residues 1382-1390 and Lys1405 each bind ATP; that span reads VGGGSTGKV. Catalysis depends on Asp1515, which acts as the Proton acceptor.

This sequence belongs to the protein kinase superfamily. STE Ser/Thr protein kinase family. STE20 subfamily. The cofactor is Mg(2+).

The catalysed reaction is L-seryl-[protein] + ATP = O-phospho-L-seryl-[protein] + ADP + H(+). The enzyme catalyses L-threonyl-[protein] + ATP = O-phospho-L-threonyl-[protein] + ADP + H(+). This chain is Serine/threonine-protein kinase pakD, found in Dictyostelium discoideum (Social amoeba).